The sequence spans 105 residues: Urease subunit beta (105 aa).

The protein belongs to the urease beta subunit family. In terms of assembly, heterotrimer of UreA (gamma), UreB (beta) and UreC (alpha) subunits. Three heterotrimers associate to form the active enzyme.

The protein localises to the cytoplasm. The catalysed reaction is urea + 2 H2O + H(+) = hydrogencarbonate + 2 NH4(+). It functions in the pathway nitrogen metabolism; urea degradation; CO(2) and NH(3) from urea (urease route): step 1/1. The polypeptide is Urease subunit beta (Pseudomonas putida (strain ATCC 47054 / DSM 6125 / CFBP 8728 / NCIMB 11950 / KT2440)).